A 143-amino-acid chain; its full sequence is Ribonuclease HI (143 aa).

In terms of domain architecture, RNase H type-1 spans 1-136; the sequence is MQEIEIFCDG…CDSLAKLEAQ (136 aa). Mg(2+) is bound by residues aspartate 9, glutamate 47, aspartate 69, and aspartate 128.

This sequence belongs to the RNase H family. As to quaternary structure, monomer. Requires Mg(2+) as cofactor.

Its subcellular location is the cytoplasm. The enzyme catalyses Endonucleolytic cleavage to 5'-phosphomonoester.. Functionally, endonuclease that specifically degrades the RNA of RNA-DNA hybrids. The chain is Ribonuclease HI (rnhA) from Helicobacter pylori (strain ATCC 700392 / 26695) (Campylobacter pylori).